The sequence spans 39 residues: Photosystem II reaction center protein L (39 aa).

Residues 18–38 (ILYWGLLLIFVLAVLFSNYFF) traverse the membrane as a helical segment.

This sequence belongs to the PsbL family. PSII is composed of 1 copy each of membrane proteins PsbA, PsbB, PsbC, PsbD, PsbE, PsbF, PsbH, PsbI, PsbJ, PsbK, PsbL, PsbM, PsbT, PsbX, PsbY, PsbZ, Psb30/Ycf12, at least 3 peripheral proteins of the oxygen-evolving complex and a large number of cofactors. It forms dimeric complexes.

It is found in the plastid membrane. Its function is as follows. One of the components of the core complex of photosystem II (PSII). PSII is a light-driven water:plastoquinone oxidoreductase that uses light energy to abstract electrons from H(2)O, generating O(2) and a proton gradient subsequently used for ATP formation. It consists of a core antenna complex that captures photons, and an electron transfer chain that converts photonic excitation into a charge separation. This subunit is found at the monomer-monomer interface and is required for correct PSII assembly and/or dimerization. In Cuscuta pentagona (Five-angled dodder), this protein is Photosystem II reaction center protein L.